Consider the following 155-residue polypeptide: Small ribosomal subunit protein uS7c (155 aa).

This sequence belongs to the universal ribosomal protein uS7 family. As to quaternary structure, part of the 30S ribosomal subunit.

It is found in the plastid. The protein localises to the chloroplast. In terms of biological role, one of the primary rRNA binding proteins, it binds directly to 16S rRNA where it nucleates assembly of the head domain of the 30S subunit. This is Small ribosomal subunit protein uS7c (rps7) from Metasequoia glyptostroboides (Dawn redwood).